A 389-amino-acid chain; its full sequence is Putative F-box protein At3g10240 (389 aa).

The segment at 1–26 is disordered; it reads MEQQEEKRKIKAYQRKSKRSKSGSSS. The segment covering 9-21 has biased composition (basic residues); it reads KIKAYQRKSKRSK. Positions 21 to 66 constitute an F-box domain; sequence KSGSSSIPLDLVSEILLRLPEKSVARFRCVSKPWSSITTEPYFINL.

This Arabidopsis thaliana (Mouse-ear cress) protein is Putative F-box protein At3g10240.